A 304-amino-acid chain; its full sequence is Kazal-type serine protease inhibitor domain-containing protein 1 (304 aa).

The N-terminal stretch at 1–30 is a signal peptide; that stretch reads MLPPPRPAAALALPVLLLLLVVLTPPPTGA. An IGFBP N-terminal domain is found at 49-129; sequence EGEGCAPCRP…EVPEPLCACR (81 aa). 7 disulfide bridges follow: Cys-53–Cys-76, Cys-56–Cys-78, Cys-61–Cys-79, Cys-67–Cys-82, Cys-90–Cys-108, Cys-102–Cys-126, and Cys-135–Cys-168. One can recognise a Kazal-like domain in the interval 120 to 170; that stretch reads EVPEPLCACRSQSPLCGSDGHTYSQICRLQEAARARPDANLTVAHPGPCES. N-linked (GlcNAc...) asparagine glycosylation is found at Asn-159 and Asn-183. The Ig-like C2-type domain maps to 172–269; that stretch reads PQIVSHPYDT…GQVEAPASLT (98 aa). Cys-193 and Cys-253 are disulfide-bonded. N-linked (GlcNAc...) asparagine glycosylation occurs at Asn-277.

The protein localises to the secreted. The protein resides in the extracellular space. Its subcellular location is the extracellular matrix. Its function is as follows. Involved in the proliferation of osteoblasts during bone formation and bone regeneration. Promotes matrix assembly. The polypeptide is Kazal-type serine protease inhibitor domain-containing protein 1 (KAZALD1) (Homo sapiens (Human)).